The following is a 622-amino-acid chain: DNA mismatch repair protein MutL (622 aa).

Residues 376–401 (REVREGSSTGRAGNYQPPEPPSREAM) form a disordered region.

It belongs to the DNA mismatch repair MutL/HexB family.

Functionally, this protein is involved in the repair of mismatches in DNA. It is required for dam-dependent methyl-directed DNA mismatch repair. May act as a 'molecular matchmaker', a protein that promotes the formation of a stable complex between two or more DNA-binding proteins in an ATP-dependent manner without itself being part of a final effector complex. The chain is DNA mismatch repair protein MutL from Aeromonas hydrophila subsp. hydrophila (strain ATCC 7966 / DSM 30187 / BCRC 13018 / CCUG 14551 / JCM 1027 / KCTC 2358 / NCIMB 9240 / NCTC 8049).